A 605-amino-acid chain; its full sequence is DNA mismatch repair protein MutL (605 aa).

Belongs to the DNA mismatch repair MutL/HexB family.

Functionally, this protein is involved in the repair of mismatches in DNA. It is required for dam-dependent methyl-directed DNA mismatch repair. May act as a 'molecular matchmaker', a protein that promotes the formation of a stable complex between two or more DNA-binding proteins in an ATP-dependent manner without itself being part of a final effector complex. In Pelotomaculum thermopropionicum (strain DSM 13744 / JCM 10971 / SI), this protein is DNA mismatch repair protein MutL.